A 57-amino-acid chain; its full sequence is uncharacterized protein (57 aa).

Residues 34–51 traverse the membrane as a helical segment; sequence TALLDAAAVVVVPGLLAA.

It localises to the membrane. This is an uncharacterized protein from Dictyostelium discoideum (Social amoeba).